We begin with the raw amino-acid sequence, 432 residues long: D-amino acid dehydrogenase (432 aa).

An FAD-binding site is contributed by 3 to 17; sequence VVILGSGVVGVTSAW.

Belongs to the DadA oxidoreductase family. It depends on FAD as a cofactor.

The catalysed reaction is a D-alpha-amino acid + A + H2O = a 2-oxocarboxylate + AH2 + NH4(+). The protein operates within amino-acid degradation; D-alanine degradation; NH(3) and pyruvate from D-alanine: step 1/1. Functionally, oxidative deamination of D-amino acids. The sequence is that of D-amino acid dehydrogenase from Salmonella agona (strain SL483).